The following is a 153-amino-acid chain: MRCPSCFHNGTRVLDSRPVDEGRSIRRRRECESCLSRFTTFERVEESPLIVVKKEGTREEFNKEKILRGLIKACEKRPVSLRQLEEVTQSVERELRNLGISEVKSDMIGEIVMEELRDIDDVAYVRFASVYRQFKDLNVFIEELKDILQKERE.

The segment at 3-34 (CPSCFHNGTRVLDSRPVDEGRSIRRRRECESC) is a zinc-finger region. One can recognise an ATP-cone domain in the interval 49–139 (LIVVKKEGTR…VYRQFKDLNV (91 aa)).

Belongs to the NrdR family. The cofactor is Zn(2+).

Negatively regulates transcription of bacterial ribonucleotide reductase nrd genes and operons by binding to NrdR-boxes. The polypeptide is Transcriptional repressor NrdR (Bacillus mycoides (strain KBAB4) (Bacillus weihenstephanensis)).